We begin with the raw amino-acid sequence, 239 residues long: Transcriptional regulatory protein BtsR (239 aa).

The Response regulatory domain maps to 3–116; sequence KVLIVDDEPL…RLEKTLHRLR (114 aa). Residue D54 is modified to 4-aspartylphosphate. Positions 137 to 239 constitute an HTH LytTR-type domain; it reads IPCTGHSRIY…LKSLKEAIGL (103 aa).

Phosphorylated by BtsS.

Its function is as follows. Member of the two-component regulatory system BtsS/BtsR. BtsR regulates expression of btsT by binding to its promoter region. This Salmonella typhimurium (strain LT2 / SGSC1412 / ATCC 700720) protein is Transcriptional regulatory protein BtsR.